Reading from the N-terminus, the 336-residue chain is D-alanine--D-alanine ligase (336 aa).

The 207-residue stretch at 124–330 (KMWFSALGIP…FTEYLSLVIK (207 aa)) folds into the ATP-grasp domain. 154-209 (ALENWGSIFVKAASQGSSVGCYKVDDSSKVAGVLKDAFGYAPYVIVEKTIKARELE) contributes to the ATP binding site. Residues aspartate 284, glutamate 297, and asparagine 299 each contribute to the Mg(2+) site.

Belongs to the D-alanine--D-alanine ligase family. The cofactor is Mg(2+). Mn(2+) serves as cofactor.

The protein resides in the cytoplasm. The catalysed reaction is 2 D-alanine + ATP = D-alanyl-D-alanine + ADP + phosphate + H(+). Its pathway is cell wall biogenesis; peptidoglycan biosynthesis. Its function is as follows. Cell wall formation. In Shewanella sp. (strain MR-7), this protein is D-alanine--D-alanine ligase.